The chain runs to 383 residues: ATP phosphoribosyltransferase regulatory subunit (383 aa).

The protein belongs to the class-II aminoacyl-tRNA synthetase family. HisZ subfamily. As to quaternary structure, heteromultimer composed of HisG and HisZ subunits.

It is found in the cytoplasm. Its pathway is amino-acid biosynthesis; L-histidine biosynthesis; L-histidine from 5-phospho-alpha-D-ribose 1-diphosphate: step 1/9. Functionally, required for the first step of histidine biosynthesis. May allow the feedback regulation of ATP phosphoribosyltransferase activity by histidine. This Paraburkholderia xenovorans (strain LB400) protein is ATP phosphoribosyltransferase regulatory subunit.